A 146-amino-acid chain; its full sequence is Large ribosomal subunit protein uL15 (146 aa).

The tract at residues 1 to 56 is disordered; sequence MKLHELRAAEGANKASKRVGRGTGSGLGKTSGKGQNGQNSRSGGGVRPGFEGGQMP. 2 stretches are compositionally biased toward gly residues: residues 21–35 and 42–52; these read RGTGSGLGKTSGKGQ and SGGGVRPGFEG.

The protein belongs to the universal ribosomal protein uL15 family. In terms of assembly, part of the 50S ribosomal subunit.

In terms of biological role, binds to the 23S rRNA. This Clostridium botulinum (strain Loch Maree / Type A3) protein is Large ribosomal subunit protein uL15.